The chain runs to 294 residues: Cytidine deaminase (294 aa).

CMP/dCMP-type deaminase domains lie at 48–168 (DDDA…FGPT) and 187–294 (AETD…RVTF). 89-91 (NME) lines the substrate pocket. Zn(2+) is bound at residue histidine 102. Glutamate 104 (proton donor) is an active-site residue. Residues cysteine 129 and cysteine 132 each contribute to the Zn(2+) site.

It belongs to the cytidine and deoxycytidylate deaminase family. As to quaternary structure, homodimer. Zn(2+) serves as cofactor.

It catalyses the reaction cytidine + H2O + H(+) = uridine + NH4(+). It carries out the reaction 2'-deoxycytidine + H2O + H(+) = 2'-deoxyuridine + NH4(+). Functionally, this enzyme scavenges exogenous and endogenous cytidine and 2'-deoxycytidine for UMP synthesis. The chain is Cytidine deaminase from Yersinia pseudotuberculosis serotype O:1b (strain IP 31758).